Consider the following 711-residue polypeptide: Polyribonucleotide nucleotidyltransferase (711 aa).

The Mg(2+) site is built by Asp-491 and Asp-497. A KH domain is found at 559–618; it reads PRLITIKINPEKIRDVIGKGGAVIRALTEETGTQIDISDEGVVTIASVDAAAGQEAKRRI. One can recognise an S1 motif domain in the interval 628 to 696; it reads GKIYEGTVLK…DRGRLKLSMK (69 aa).

This sequence belongs to the polyribonucleotide nucleotidyltransferase family. Mg(2+) serves as cofactor.

The protein localises to the cytoplasm. It catalyses the reaction RNA(n+1) + phosphate = RNA(n) + a ribonucleoside 5'-diphosphate. Functionally, involved in mRNA degradation. Catalyzes the phosphorolysis of single-stranded polyribonucleotides processively in the 3'- to 5'-direction. The sequence is that of Polyribonucleotide nucleotidyltransferase from Janthinobacterium sp. (strain Marseille) (Minibacterium massiliensis).